The following is a 587-amino-acid chain: Kelch-like protein 3 (587 aa).

Positions 1–22 (MDGESIKPSSQPLIQTGDDEKN) are disordered. S10 bears the Phosphoserine mark. The 68-residue stretch at 50–117 (CDVMIVAEDV…IYTAEIEVTE (68 aa)) folds into the BTB domain. The BACK domain maps to 152 to 254 (CLGIRAFADV…PRDYLVQTVE (103 aa)). A Phosphothreonine modification is found at T295. 6 Kelch repeats span residues 302–347 (VMIV…FMAG), 348–394 (HVYA…VLND), 396–441 (LYAV…VVEG), 442–490 (KLYA…VLSG), 491–537 (QLYA…AVNG), and 539–585 (LYVV…VIHK). A Phosphothreonine modification is found at T375. S376 and S433 each carry phosphoserine.

The protein belongs to the KLHL3 family. Homodimer. Component of the BCR(KLHL3) E3 ubiquitin ligase complex, at least composed of CUL3 and KLHL3 and RBX1. Interacts with CLDN8. In terms of processing, phosphorylation at Ser-433 by PKA or PKC decreases the interaction with WNK1 and WNK4, leading to inhibit their degradation by the BCR(KLHL3) complex. Phosphorylated at Ser-433 by PKC in response to angiotensin II signaling, decreasing ability to promote degradation of WNK1 and WNK4, leading to activation of Na-Cl cotransporter SLC12A3/NCC. Phosphorylation at Ser-433 is increased by insulin. Dephosphorylated at Ser-433 by calcineurin PPP3CA, promoting degradation of WNK1 and WNK4.

It is found in the cytoplasm. The protein localises to the cytoskeleton. Its subcellular location is the cytosol. It participates in protein modification; protein ubiquitination. Functionally, substrate-specific adapter of a BCR (BTB-CUL3-RBX1) E3 ubiquitin ligase complex that acts as a regulator of ion transport in the distal nephron. The BCR(KLHL3) complex acts by mediating ubiquitination and degradation of WNK1 and WNK4, two activators of Na-Cl cotransporter SLC12A3/NCC in distal convoluted tubule cells of kidney, thereby regulating NaCl reabsorption. The BCR(KLHL3) complex also mediates ubiquitination and degradation of WNK3. The BCR(KLHL3) complex also mediates ubiquitination of CLDN8, a tight-junction protein required for paracellular chloride transport in the kidney, leading to its degradation. This is Kelch-like protein 3 (KLHL3) from Bos taurus (Bovine).